The chain runs to 245 residues: DNA polymerase sliding clamp (245 aa).

It belongs to the PCNA family. Homotrimer. The subunits circularize to form a toroid; DNA passes through its center. Replication factor C (RFC) is required to load the toroid on the DNA.

Sliding clamp subunit that acts as a moving platform for DNA processing. Responsible for tethering the catalytic subunit of DNA polymerase and other proteins to DNA during high-speed replication. The sequence is that of DNA polymerase sliding clamp from Methanosarcina barkeri (strain Fusaro / DSM 804).